A 243-amino-acid chain; its full sequence is Phosphoribosyl isomerase A (243 aa).

Aspartate 9 acts as the Proton acceptor in catalysis. Aspartate 128 functions as the Proton donor in the catalytic mechanism.

The protein belongs to the HisA/HisF family.

It localises to the cytoplasm. The enzyme catalyses 1-(5-phospho-beta-D-ribosyl)-5-[(5-phospho-beta-D-ribosylamino)methylideneamino]imidazole-4-carboxamide = 5-[(5-phospho-1-deoxy-D-ribulos-1-ylimino)methylamino]-1-(5-phospho-beta-D-ribosyl)imidazole-4-carboxamide. The catalysed reaction is N-(5-phospho-beta-D-ribosyl)anthranilate = 1-(2-carboxyphenylamino)-1-deoxy-D-ribulose 5-phosphate. Its pathway is amino-acid biosynthesis; L-histidine biosynthesis; L-histidine from 5-phospho-alpha-D-ribose 1-diphosphate: step 4/9. The protein operates within amino-acid biosynthesis; L-tryptophan biosynthesis; L-tryptophan from chorismate: step 3/5. Involved in both the histidine and tryptophan biosynthetic pathways. This chain is Phosphoribosyl isomerase A, found in Mycolicibacterium paratuberculosis (strain ATCC BAA-968 / K-10) (Mycobacterium paratuberculosis).